The primary structure comprises 236 residues: Small ribosomal subunit protein uS3 (236 aa).

The region spanning 39-107 is the KH type-2 domain; it reads IREVLEKQLK…EVHLNIVEVR (69 aa). The tract at residues 214–236 is disordered; that stretch reads ASERRALEGGDSGGGRSRRDDRG.

The protein belongs to the universal ribosomal protein uS3 family. As to quaternary structure, part of the 30S ribosomal subunit. Forms a tight complex with proteins S10 and S14.

In terms of biological role, binds the lower part of the 30S subunit head. Binds mRNA in the 70S ribosome, positioning it for translation. This chain is Small ribosomal subunit protein uS3, found in Parvibaculum lavamentivorans (strain DS-1 / DSM 13023 / NCIMB 13966).